Reading from the N-terminus, the 163-residue chain is MGVTKKPDLNDPVLRAKLAKGMGHNYYGEPAWPNDLLYIFPVVILGTIACNGGLAVLEPSMIGEPADPFATPLEILPEWYFFPVFQILRTVPNKLLGVLLMVSVPAGLLTVPFLENVNKFQNPFRRPVATTVFLVGTLVALWLGIGATLPIEKSLTLGLFSIK.

The next 3 membrane-spanning stretches (helical) occupy residues 36–56, 95–115, and 131–151; these read LLYIFPVVILGTIACNGGLAV, LLGVLLMVSVPAGLLTVPFLE, and TVFLVGTLVALWLGIGATLPI.

The protein belongs to the cytochrome b family. PetD subfamily. The 4 large subunits of the cytochrome b6-f complex are cytochrome b6, subunit IV (17 kDa polypeptide, petD), cytochrome f and the Rieske protein, while the 4 small subunits are petG, petL, petM and petN. The complex functions as a dimer.

The protein resides in the plastid. It localises to the chloroplast thylakoid membrane. Functionally, component of the cytochrome b6-f complex, which mediates electron transfer between photosystem II (PSII) and photosystem I (PSI), cyclic electron flow around PSI, and state transitions. The protein is Cytochrome b6-f complex subunit 4 of Pelargonium hortorum (Common geranium).